A 215-amino-acid chain; its full sequence is Small ribosomal subunit protein uS7 (215 aa).

The protein belongs to the universal ribosomal protein uS7 family. Part of the 30S ribosomal subunit.

Functionally, one of the primary rRNA binding proteins, it binds directly to 16S rRNA where it nucleates assembly of the head domain of the 30S subunit. Is located at the subunit interface close to the decoding center. The chain is Small ribosomal subunit protein uS7 from Thermococcus gammatolerans (strain DSM 15229 / JCM 11827 / EJ3).